Here is a 144-residue protein sequence, read N- to C-terminus: Putative pre-16S rRNA nuclease (144 aa).

It belongs to the YqgF nuclease family.

It localises to the cytoplasm. In terms of biological role, could be a nuclease involved in processing of the 5'-end of pre-16S rRNA. This is Putative pre-16S rRNA nuclease from Prochlorococcus marinus (strain NATL1A).